The sequence spans 324 residues: Acetyl-coenzyme A carboxylase carboxyl transferase subunit alpha (324 aa).

The CoA carboxyltransferase C-terminal domain maps to 37-291 (KLDKRLDRLK…QEYVLQEWVK (255 aa)).

Belongs to the AccA family. As to quaternary structure, acetyl-CoA carboxylase is a heterohexamer composed of biotin carboxyl carrier protein (AccB), biotin carboxylase (AccC) and two subunits each of ACCase subunit alpha (AccA) and ACCase subunit beta (AccD).

Its subcellular location is the cytoplasm. It catalyses the reaction N(6)-carboxybiotinyl-L-lysyl-[protein] + acetyl-CoA = N(6)-biotinyl-L-lysyl-[protein] + malonyl-CoA. It participates in lipid metabolism; malonyl-CoA biosynthesis; malonyl-CoA from acetyl-CoA: step 1/1. Its function is as follows. Component of the acetyl coenzyme A carboxylase (ACC) complex. First, biotin carboxylase catalyzes the carboxylation of biotin on its carrier protein (BCCP) and then the CO(2) group is transferred by the carboxyltransferase to acetyl-CoA to form malonyl-CoA. The chain is Acetyl-coenzyme A carboxylase carboxyl transferase subunit alpha from Chlamydia trachomatis serovar L2 (strain ATCC VR-902B / DSM 19102 / 434/Bu).